The following is a 128-amino-acid chain: Large ribosomal subunit protein bL12 (128 aa).

The interval 97 to 128 (GAPSTLKEGVSKEDAEEAKKQLTEAGATVEVK) is disordered. A compositionally biased stretch (basic and acidic residues) spans 105–118 (GVSKEDAEEAKKQL).

This sequence belongs to the bacterial ribosomal protein bL12 family. As to quaternary structure, homodimer. Part of the ribosomal stalk of the 50S ribosomal subunit. Forms a multimeric L10(L12)X complex, where L10 forms an elongated spine to which 2 to 4 L12 dimers bind in a sequential fashion. Binds GTP-bound translation factors.

Forms part of the ribosomal stalk which helps the ribosome interact with GTP-bound translation factors. Is thus essential for accurate translation. The chain is Large ribosomal subunit protein bL12 from Lawsonia intracellularis (strain PHE/MN1-00).